The following is a 434-amino-acid chain: Ribosomal protein uS12 methylthiotransferase RimO (434 aa).

An MTTase N-terminal domain is found at 9-125; that stretch reads PAIFLLSLGC…VLAAIGAKYR (117 aa). [4Fe-4S] cluster contacts are provided by cysteine 18, cysteine 54, cysteine 88, cysteine 149, cysteine 153, and cysteine 156. Residues 135–364 form the Radical SAM core domain; it reads LTPPHYAFLK…MELQEGISAS (230 aa). The region spanning 367-434 is the TRAM domain; that stretch reads RKLEGQTLKV…AYELFGRISG (68 aa).

It belongs to the methylthiotransferase family. RimO subfamily. It depends on [4Fe-4S] cluster as a cofactor.

The protein resides in the cytoplasm. The enzyme catalyses L-aspartate(89)-[ribosomal protein uS12]-hydrogen + (sulfur carrier)-SH + AH2 + 2 S-adenosyl-L-methionine = 3-methylsulfanyl-L-aspartate(89)-[ribosomal protein uS12]-hydrogen + (sulfur carrier)-H + 5'-deoxyadenosine + L-methionine + A + S-adenosyl-L-homocysteine + 2 H(+). Its function is as follows. Catalyzes the methylthiolation of an aspartic acid residue of ribosomal protein uS12. In Chlorobaculum tepidum (strain ATCC 49652 / DSM 12025 / NBRC 103806 / TLS) (Chlorobium tepidum), this protein is Ribosomal protein uS12 methylthiotransferase RimO.